We begin with the raw amino-acid sequence, 668 residues long: Probable syringafactin export ATP-binding/permease protein SyfD (668 aa).

Residues 22–260 (LRLQQVSRSF…APEAQPATPP (239 aa)) enclose the ABC transporter domain. Residue 58–65 (GASGSGKS) coordinates ATP. The interval 242 to 263 (RRTAQTTQPAPEAQPATPPGPA) is disordered. The span at 245-256 (AQTTQPAPEAQP) shows a compositional bias: low complexity. The next 5 helical transmembrane spans lie at 267 to 287 (LLASLGLFREAFNMAWIALIS), 293 to 313 (LLTMLGIIIGITSVVSISAIG), 541 to 561 (LTLLLSLIAVISLVVGGIGVM), 602 to 622 (MGGVIGIGLSYAIGYLFTLFV), and 631 to 651 (LASVVTAFACSTLIGVLFGFV).

Belongs to the ABC transporter superfamily. Macrolide exporter (TC 3.A.1.122) family. As to quaternary structure, probably part of a tripartite efflux system, which is composed of an inner membrane transporter, a periplasmic membrane fusion protein, and an outer membrane component.

Its subcellular location is the cell inner membrane. Its function is as follows. Probably involved in the export of syringafactins. The protein is Probable syringafactin export ATP-binding/permease protein SyfD of Pseudomonas syringae pv. tomato (strain ATCC BAA-871 / DC3000).